A 368-amino-acid polypeptide reads, in one-letter code: F-box only protein 28 (368 aa).

Over residues 1-11 the composition is skewed to basic and acidic residues; sequence MAAASEERMAE. The disordered stretch occupies residues 1–56; it reads MAAASEERMAEEGGGGHGDGGSCSAAGSAQRQPPAPPSQAPPPGSQAPAAPALAPD. Gly residues predominate over residues 12-21; sequence EGGGGHGDGG. Residues 22–32 show a composition bias toward low complexity; sequence SCSAAGSAQRQ. Residues 33-45 are compositionally biased toward pro residues; it reads PPAPPSQAPPPGS. Positions 46 to 55 are enriched in low complexity; the sequence is QAPAAPALAP. The F-box domain maps to 61 to 109; sequence NNTLVALPIVAIENILSFMSYDEISQLRLVCKRMDLVCQRMLNQGFLKV. A phosphoserine mark is found at serine 235 and serine 242. Threonine 270 bears the Phosphothreonine mark. The interval 328-368 is disordered; that stretch reads MESAVGTSSGSGQSEESPRKRRKATEAIDSLRKSKRLRNRK. Serine 344 is subject to Phosphoserine.

Part of a SCF (SKP1-cullin-F-box) protein ligase complex.

The protein resides in the chromosome. The protein localises to the centromere. It localises to the kinetochore. Its function is as follows. Probably recognizes and binds to some phosphorylated proteins and promotes their ubiquitination and degradation. The sequence is that of F-box only protein 28 (Fbxo28) from Mus musculus (Mouse).